Here is a 248-residue protein sequence, read N- to C-terminus: Sugar fermentation stimulation protein homolog (248 aa).

Belongs to the SfsA family.

This is Sugar fermentation stimulation protein homolog from Methylorubrum extorquens (strain PA1) (Methylobacterium extorquens).